Consider the following 481-residue polypeptide: 3-isopropylmalate dehydratase large subunit (481 aa).

Cysteine 357, cysteine 417, and cysteine 420 together coordinate [4Fe-4S] cluster.

Belongs to the aconitase/IPM isomerase family. LeuC type 1 subfamily. As to quaternary structure, heterodimer of LeuC and LeuD. It depends on [4Fe-4S] cluster as a cofactor.

It carries out the reaction (2R,3S)-3-isopropylmalate = (2S)-2-isopropylmalate. The protein operates within amino-acid biosynthesis; L-leucine biosynthesis; L-leucine from 3-methyl-2-oxobutanoate: step 2/4. Functionally, catalyzes the isomerization between 2-isopropylmalate and 3-isopropylmalate, via the formation of 2-isopropylmaleate. The chain is 3-isopropylmalate dehydratase large subunit from Maricaulis maris (strain MCS10) (Caulobacter maris).